We begin with the raw amino-acid sequence, 162 residues long: Balbiani ring protein 2 (162 aa).

Positions 1–31 (CDDAMRKTESDKCTNIGGKFDPSTCKCTPET) are last constant region. A last Cys-1 repeat region spans residues 32 to 51 (VTEGPTTCLESSESDEVTTK). Positions 52–162 (KPCDCTCAPD…VKGLEDILNS (111 aa)) are unique region.

In terms of tissue distribution, salivary gland.

The protein resides in the secreted. Its function is as follows. Used by the larvae to construct a supramolecular structure, the larval tube. The polypeptide is Balbiani ring protein 2 (BR2) (Chironomus pallidivittatus (Midge)).